The primary structure comprises 202 residues: Ras-related protein Rab-1A (202 aa).

Residues 15 to 23 (GDSGVGKSC), 33 to 40 (YSESFIST), 63 to 67 (DTAGQ), 121 to 124 (NKSD), and 151 to 153 (SAK) each bind GTP. Residues 37 to 45 (FISTIGVDF) carry the Effector region motif. The tract at residues 180-202 (QTVDKNKVVPGSSAPISPKSGCC) is disordered. 2 S-geranylgeranyl cysteine lipidation sites follow: Cys-201 and Cys-202.

The protein belongs to the small GTPase superfamily. Rab family.

The protein resides in the cell membrane. In Dictyostelium discoideum (Social amoeba), this protein is Ras-related protein Rab-1A (rab1A).